Consider the following 392-residue polypeptide: Elongation factor Tu-3 (392 aa).

A tr-type G domain is found at K10–E206. The G1 stretch occupies residues G19–T26. G19–T26 contributes to the GTP binding site. T26 contacts Mg(2+). The G2 stretch occupies residues G63 to N67. The G3 stretch occupies residues D84–G87. GTP contacts are provided by residues D84 to H88 and N139 to D142. The G4 stretch occupies residues N139 to D142. Residues S176 to L178 form a G5 region.

The protein belongs to the TRAFAC class translation factor GTPase superfamily. Classic translation factor GTPase family. EF-Tu/EF-1A subfamily. Monomer.

Its subcellular location is the cytoplasm. The enzyme catalyses GTP + H2O = GDP + phosphate + H(+). GTP hydrolase that promotes the GTP-dependent binding of aminoacyl-tRNA to the A-site of ribosomes during protein biosynthesis. The polypeptide is Elongation factor Tu-3 (Streptomyces coelicolor (strain ATCC BAA-471 / A3(2) / M145)).